Reading from the N-terminus, the 333-residue chain is Adenosine deaminase (333 aa).

Positions 12 and 14 each coordinate Zn(2+). The substrate site is built by His-14, Asp-16, and Gly-170. A Zn(2+)-binding site is contributed by His-197. The active-site Proton donor is the Glu-200. Asp-278 is a binding site for Zn(2+). Asp-279 serves as a coordination point for substrate.

This sequence belongs to the metallo-dependent hydrolases superfamily. Adenosine and AMP deaminases family. Adenosine deaminase subfamily. Zn(2+) serves as cofactor.

It catalyses the reaction adenosine + H2O + H(+) = inosine + NH4(+). It carries out the reaction 2'-deoxyadenosine + H2O + H(+) = 2'-deoxyinosine + NH4(+). Catalyzes the hydrolytic deamination of adenosine and 2-deoxyadenosine. This is Adenosine deaminase from Shigella flexneri serotype 5b (strain 8401).